A 350-amino-acid chain; its full sequence is Thymidine kinase (350 aa).

15–22 (GAHGLGKT) contributes to the ATP binding site. Glutamate 44 acts as the Proton acceptor in catalysis. Glutamine 88 is a binding site for substrate. Arginine 178 serves as a coordination point for ATP. A substrate-binding site is contributed by arginine 184.

The protein belongs to the herpesviridae thymidine kinase family. Homodimer.

It carries out the reaction thymidine + ATP = dTMP + ADP + H(+). Its function is as follows. Catalyzes the transfer of the gamma-phospho group of ATP to thymidine to generate dTMP in the salvage pathway of pyrimidine synthesis. The dTMP serves as a substrate for DNA polymerase during viral DNA replication. Allows the virus to be reactivated and to grow in non-proliferative cells lacking a high concentration of phosphorylated nucleic acid precursors. In Bos taurus (Bovine), this protein is Thymidine kinase.